The following is a 418-amino-acid chain: Vasopressin V1a receptor (418 aa).

The disordered stretch occupies residues 1–43; sequence MRLSAGPDAGPSGNSSPWWPLATGAGNTSREAEALGEGNGPPR. Residues 1–52 lie on the Extracellular side of the membrane; sequence MRLSAGPDAGPSGNSSPWWPLATGAGNTSREAEALGEGNGPPRDVRNEELAK. A glycan (N-linked (GlcNAc...) asparagine) is linked at Asn-27. The chain crosses the membrane as a helical span at residues 53 to 76; it reads LEIAVLAVTFAVAVLGNSSVLLAL. Residues 77–88 lie on the Cytoplasmic side of the membrane; the sequence is HRTPRKTSRMHL. Residues 89–110 form a helical membrane-spanning segment; it reads FIRHLSLADLAVAFFQVLPQMC. Over 111 to 125 the chain is Extracellular; it reads WDITYRFRGPDWLCR. Cys-124 and Cys-203 are joined by a disulfide. The helical transmembrane segment at 126-147 threads the bilayer; the sequence is VVKHLQVFGMFASAYMLVVMTA. Topologically, residues 148–168 are cytoplasmic; sequence DRYIAVCHPLKTLQQPARRSR. Residues 169–190 form a helical membrane-spanning segment; sequence LMIAAAWVLSFVLSTPQYFVFS. Over 191–218 the chain is Extracellular; it reads MIEVNNVTKARDCWATFIQPWGSRAYVT. A glycan (N-linked (GlcNAc...) asparagine) is linked at Asn-196. A helical membrane pass occupies residues 219–239; sequence WMTGGIFVAPVVILGTCYGFI. The Cytoplasmic segment spans residues 240–293; sequence CYNIWCNVRGKTASRQSKGAEQAGVAFQKGFLLAPCVSSVKSISRAKIRTVKMT. A helical transmembrane segment spans residues 294–313; that stretch reads FVIVTAYIVCWAPFFIIQMW. At 314 to 331 the chain is on the extracellular side; sequence SVWDPMSVWTESENPTIT. The helical transmembrane segment at 332 to 351 threads the bilayer; that stretch reads ITALLGSLNSCCNPWIYMFF. The Cytoplasmic portion of the chain corresponds to 352–418; sequence SGHLLQDCVQ…KSIKFIPVST (67 aa). 2 S-palmitoyl cysteine lipidation sites follow: Cys-365 and Cys-366. Residues 377 to 410 are disordered; the sequence is DTDSMSRRQTFYSNNRSPTNSTGMWKDSPKSSKS. A compositionally biased stretch (polar residues) spans 383 to 399; that stretch reads RRQTFYSNNRSPTNSTG. Position 404 is a phosphoserine (Ser-404).

The protein belongs to the G-protein coupled receptor 1 family. Vasopressin/oxytocin receptor subfamily.

The protein localises to the cell membrane. In terms of biological role, receptor for arginine vasopressin. The activity of this receptor is mediated by G proteins which activate a phosphatidyl-inositol-calcium second messenger system. Has been involved in social behaviors, including affiliation and attachment. The chain is Vasopressin V1a receptor (AVPR1A) from Homo sapiens (Human).